A 167-amino-acid polypeptide reads, in one-letter code: tRNA-specific adenosine deaminase (167 aa).

Positions 6–117 (FSHEYWMRHA…DAKTGAAGSL (112 aa)) constitute a CMP/dCMP-type deaminase domain. Residue His57 participates in Zn(2+) binding. Glu59 functions as the Proton donor in the catalytic mechanism. Zn(2+) is bound by residues Cys87 and Cys90.

The protein belongs to the cytidine and deoxycytidylate deaminase family. In terms of assembly, homodimer. It depends on Zn(2+) as a cofactor.

It carries out the reaction adenosine(34) in tRNA + H2O + H(+) = inosine(34) in tRNA + NH4(+). Functionally, catalyzes the deamination of adenosine to inosine at the wobble position 34 of tRNA(Arg2). This chain is tRNA-specific adenosine deaminase, found in Escherichia coli O157:H7.